A 286-amino-acid chain; its full sequence is MSDILNNLIHLLKLEKIDDLIFRGESQDLGFRQVFGGQVVAQALSAAMQVAPEDRILHSCHAYFLAPGDSQYPIIYDVETLREGRNFSALCVKAIQHKNTICHVTASFQVPEKGFEHQNTMPNVGAPEDFTDENVMLQKVAQTLPEPLNEKFAAERPFEVRTKYLNNPFNGTKLPAEQYSWFKTNGETPLDIKIQQCLLAYFSDFHCILTALHPHEKGFLQKGMKVATIDHSIWFHRPFDLNHWHLHAIESNNAFGGRGLAQGQIFSQDGQLIATTQQEGLIRFSE.

Residues D204, T228, and Q278 each act as charge relay system in the active site.

The protein belongs to the C/M/P thioester hydrolase family. In terms of assembly, homotetramer.

The enzyme catalyses a fatty acyl-CoA + H2O = a fatty acid + CoA + H(+). Thioesterase that has relatively broad substrate specificity, hydrolyzing primarily medium- and long-chain acyl-CoA substrates to free fatty acids and CoA. The chain is Acyl-CoA thioesterase 2 (tesB) from Haemophilus influenzae (strain ATCC 51907 / DSM 11121 / KW20 / Rd).